The following is a 673-amino-acid chain: Elongation factor G 1 (673 aa).

A tr-type G domain is found at 3 to 277 (KELRNIGIIA…SIVDYLPSPL (275 aa)). GTP is bound by residues 12–19 (AHIDAGKT), 76–80 (DTPGH), and 130–133 (NKMD).

Belongs to the TRAFAC class translation factor GTPase superfamily. Classic translation factor GTPase family. EF-G/EF-2 subfamily.

It localises to the cytoplasm. In terms of biological role, catalyzes the GTP-dependent ribosomal translocation step during translation elongation. During this step, the ribosome changes from the pre-translocational (PRE) to the post-translocational (POST) state as the newly formed A-site-bound peptidyl-tRNA and P-site-bound deacylated tRNA move to the P and E sites, respectively. Catalyzes the coordinated movement of the two tRNA molecules, the mRNA and conformational changes in the ribosome. In Syntrophomonas wolfei subsp. wolfei (strain DSM 2245B / Goettingen), this protein is Elongation factor G 1.